Consider the following 449-residue polypeptide: Glucose-6-phosphate isomerase (449 aa).

The active-site Proton donor is Glu-291. Residues His-312 and Lys-426 contribute to the active site.

Belongs to the GPI family.

It is found in the cytoplasm. It carries out the reaction alpha-D-glucose 6-phosphate = beta-D-fructose 6-phosphate. Its pathway is carbohydrate biosynthesis; gluconeogenesis. The protein operates within carbohydrate degradation; glycolysis; D-glyceraldehyde 3-phosphate and glycerone phosphate from D-glucose: step 2/4. Functionally, catalyzes the reversible isomerization of glucose-6-phosphate to fructose-6-phosphate. The sequence is that of Glucose-6-phosphate isomerase from Clostridium botulinum (strain Eklund 17B / Type B).